Here is a 277-residue protein sequence, read N- to C-terminus: UBX domain-containing protein 8 (277 aa).

Residue methionine 1 is a topological domain, cytoplasmic. The helical transmembrane segment at 2–22 threads the bilayer; it reads ASRGVVGLFLLSALPLLCLEL. Residues 23–33 lie on the Lumenal side of the membrane; the sequence is RRGIPSLGIKD. The chain crosses the membrane as a helical span at residues 34–54; it reads LILLSGRIFLLLALLTLVISV. Over 55-277 the chain is Cytoplasmic; that stretch reads TTSWFNSLKP…NVEEKEQSSQ (223 aa). Positions 64 to 89 are disordered; sequence PSQGHLKEGEKENEKRRRLVRERQQE. Positions 68–89 are enriched in basic and acidic residues; it reads HLKEGEKENEKRRRLVRERQQE. A UBX domain is found at 193–269; the sequence is TAEEVVTVAL…GITVDTVLNV (77 aa).

As to quaternary structure, interacts with SYVN1 and VCP. As to expression, highly expressed in gonads. In testis, expressed in post-meiotic round spermatids, while in ovaries it is expressed in granulosa cells.

The protein resides in the endoplasmic reticulum membrane. Functionally, involved in endoplasmic reticulum-associated degradation (ERAD) for misfolded lumenal proteins, possibly by tethering VCP to the endoplasmic reticulum membrane. May play a role in reproduction. This is UBX domain-containing protein 8 (Ubxn8) from Mus musculus (Mouse).